Here is a 260-residue protein sequence, read N- to C-terminus: ATP synthase subunit a (260 aa).

Positions methionine 1–asparagine 11 are cleaved as a propeptide — removed in mature form. The next 6 membrane-spanning stretches (helical) occupy residues isoleucine 37 to leucine 57, tyrosine 96 to isoleucine 116, phenylalanine 126 to phenylalanine 146, phenylalanine 152 to isoleucine 172, isoleucine 192 to isoleucine 212, and leucine 217 to isoleucine 237.

It belongs to the ATPase A chain family. In terms of assembly, F-type ATPases have 2 components, CF(1) - the catalytic core - and CF(0) - the membrane proton channel. CF(1) has five subunits: alpha(3), beta(3), gamma(1), delta(1), epsilon(1). CF(0) has three main subunits: a, b and c.

It localises to the mitochondrion inner membrane. In terms of biological role, mitochondrial membrane ATP synthase (F(1)F(0) ATP synthase or Complex V) produces ATP from ADP in the presence of a proton gradient across the membrane which is generated by electron transport complexes of the respiratory chain. F-type ATPases consist of two structural domains, F(1) - containing the extramembraneous catalytic core and F(0) - containing the membrane proton channel, linked together by a central stalk and a peripheral stalk. During catalysis, ATP synthesis in the catalytic domain of F(1) is coupled via a rotary mechanism of the central stalk subunits to proton translocation. Key component of the proton channel; it may play a direct role in the translocation of protons across the membrane. This chain is ATP synthase subunit a (ATP6), found in Candida glabrata (strain ATCC 2001 / BCRC 20586 / JCM 3761 / NBRC 0622 / NRRL Y-65 / CBS 138) (Yeast).